The following is a 403-amino-acid chain: S-adenosylmethionine synthase (403 aa).

Histidine 15 provides a ligand contact to ATP. Residue aspartate 17 participates in Mg(2+) binding. Position 43 (glutamate 43) interacts with K(+). L-methionine contacts are provided by glutamate 56 and glutamine 99. Residues 99-109 (QSPDINQGVDR) form a flexible loop region. Residues 166–168 (DAK), 232–233 (KF), aspartate 241, 247–248 (RK), alanine 264, and lysine 268 contribute to the ATP site. An L-methionine-binding site is contributed by aspartate 241. L-methionine is bound at residue lysine 272.

Belongs to the AdoMet synthase family. In terms of assembly, homotetramer; dimer of dimers. The cofactor is Mg(2+). It depends on K(+) as a cofactor.

It localises to the cytoplasm. It carries out the reaction L-methionine + ATP + H2O = S-adenosyl-L-methionine + phosphate + diphosphate. Its pathway is amino-acid biosynthesis; S-adenosyl-L-methionine biosynthesis; S-adenosyl-L-methionine from L-methionine: step 1/1. Catalyzes the formation of S-adenosylmethionine (AdoMet) from methionine and ATP. The overall synthetic reaction is composed of two sequential steps, AdoMet formation and the subsequent tripolyphosphate hydrolysis which occurs prior to release of AdoMet from the enzyme. The protein is S-adenosylmethionine synthase of Xylella fastidiosa (strain M12).